Reading from the N-terminus, the 360-residue chain is MAPAEKAFVLRKKMDTAIEDRPGQTLTDDHQVKVAIKATGICGSDVHYWKEGGIGDFILKKPMILGHESAGVVVEVGKGVSSLKPGDPVAVEPGCVCRLCDYCRSGRYNLCPHMEFAATPPYDGTLRTYYITTEDFCTKLPKQISVEEGALFEPMSVAVHAMTRGNLKCGSRVLVMGCGTVGLLMMAVAKAYGAIDIVAVDASPSRVEFAQKYVGAKPFTPIAAKENESLPDYAQRYKQAIIEKYGEFDFAVDATGVGICIHTAVLALKRGGTFVQAGNGKPVIDFPINHIINYEINVLGSFRYAHGCYKQSLFLVSNGLVDVKPLITHRFAFKDALKAYETVASGEEGVLKVIIGGPDA.

Cysteine 42 is a Zn(2+) binding site. Residue tyrosine 48 coordinates substrate. Positions 67 and 68 each coordinate Zn(2+). Glutamate 153 contributes to the substrate binding site. NAD(+) contacts are provided by residues aspartate 201, arginine 206, 277 to 279 (AGN), and 301 to 303 (SFR). Substrate is bound by residues arginine 303 and tyrosine 304.

Belongs to the zinc-containing alcohol dehydrogenase family. In terms of assembly, homotetramer. Zn(2+) serves as cofactor.

The catalysed reaction is keto-D-fructose + NADH + H(+) = D-sorbitol + NAD(+). Functionally, polyol dehydrogenase that catalyzes the reversible NAD(+)-dependent oxidation of various sugar alcohols. Is active with D-sorbitol (D-glucitol) as substrate, leading to the C2-oxidized product D-fructose. Suppresses growth arrest induced by a p53 tumor mutant in fission yeast. In Schizosaccharomyces pombe (strain 972 / ATCC 24843) (Fission yeast), this protein is Sorbitol dehydrogenase (tms1).